The following is a 223-amino-acid chain: Neurotrophic factor BDNF precursor form (223 aa).

A signal peptide spans 1–5; it reads SCMKA. The propeptide occupies 6–114; that stretch reads APMKEVSIRG…AANMSMRVRR (109 aa). Asn-107 carries N-linked (GlcNAc...) asparagine glycosylation. 2 disulfides stabilise this stretch: Cys-127-Cys-194 and Cys-172-Cys-223.

Belongs to the NGF-beta family.

The protein resides in the secreted. In terms of biological role, promotes the survival of neuronal populations that are all located either in the central nervous system or directly connected to it. The protein is Neurotrophic factor BDNF precursor form (BDNF) of Lichanura trivirgata (Rosy boa).